We begin with the raw amino-acid sequence, 379 residues long: Glucose-1-phosphate adenylyltransferase (379 aa).

Residues Y99, G164, 179-180 (EK), and S190 contribute to the alpha-D-glucose 1-phosphate site.

This sequence belongs to the bacterial/plant glucose-1-phosphate adenylyltransferase family. As to quaternary structure, homotetramer.

The catalysed reaction is alpha-D-glucose 1-phosphate + ATP + H(+) = ADP-alpha-D-glucose + diphosphate. The protein operates within glycan biosynthesis; glycogen biosynthesis. Involved in the biosynthesis of ADP-glucose, a building block required for the elongation reactions to produce glycogen. Catalyzes the reaction between ATP and alpha-D-glucose 1-phosphate (G1P) to produce pyrophosphate and ADP-Glc. This Bacillus licheniformis (strain ATCC 14580 / DSM 13 / JCM 2505 / CCUG 7422 / NBRC 12200 / NCIMB 9375 / NCTC 10341 / NRRL NRS-1264 / Gibson 46) protein is Glucose-1-phosphate adenylyltransferase.